The sequence spans 231 residues: Putative cobalt transport protein CbiM 1 (231 aa).

The next 6 helical transmembrane spans lie at 6-26 (GFLPIGWCVFWAVLAAPFLIY), 41-61 (VLPLMAVCGAFIFVVSLVDIP), 79-99 (FFGPAVTSVLGLIILVFQALL), 107-127 (TLGATAFSMAVMGPLAAWLVF), 136-156 (VPLGPAVFCAAVVANCVTYLI), and 172-192 (LTAFLAAAAVFAVVQIPISII).

This sequence belongs to the CbiM family. As to quaternary structure, forms an energy-coupling factor (ECF) transporter complex composed of an ATP-binding protein (A component, CbiO), a transmembrane protein (T component, CbiQ) and 2 possible substrate-capture proteins (S components, CbiM and CbiN) of unknown stoichimetry.

The protein localises to the cell membrane. The protein operates within cofactor biosynthesis; adenosylcobalamin biosynthesis. Part of the energy-coupling factor (ECF) transporter complex CbiMNOQ involved in cobalt import. The polypeptide is Putative cobalt transport protein CbiM 1 (Methanocorpusculum labreanum (strain ATCC 43576 / DSM 4855 / Z)).